Reading from the N-terminus, the 267-residue chain is Undecaprenyl-diphosphatase (267 aa).

The next 7 membrane-spanning stretches (helical) occupy residues 1-21 (MTLW…FLPI), 39-59 (AGVA…LFYY), 85-105 (AKLG…GFMV), 117-137 (LLIA…DFWG), 189-209 (FSFL…LWKL), 220-240 (LIAL…ALFI), and 246-266 (VGMM…FFVF).

Belongs to the UppP family.

It is found in the cell inner membrane. The catalysed reaction is di-trans,octa-cis-undecaprenyl diphosphate + H2O = di-trans,octa-cis-undecaprenyl phosphate + phosphate + H(+). Catalyzes the dephosphorylation of undecaprenyl diphosphate (UPP). Confers resistance to bacitracin. This is Undecaprenyl-diphosphatase from Dichelobacter nodosus (strain VCS1703A).